Here is a 315-residue protein sequence, read N- to C-terminus: Type II methyltransferase M.Bsp6I (315 aa).

Residues 2-315 (LQIASLFAGV…IAENIYKSML (314 aa)) enclose the SAM-dependent MTase C5-type domain. Residue cysteine 73 is part of the active site.

This sequence belongs to the class I-like SAM-binding methyltransferase superfamily. C5-methyltransferase family.

It catalyses the reaction a 2'-deoxycytidine in DNA + S-adenosyl-L-methionine = a 5-methyl-2'-deoxycytidine in DNA + S-adenosyl-L-homocysteine + H(+). Its function is as follows. A methylase that recognizes the double-stranded sequence 5'-GCNGC-3', methylates C-? on both strands, and protects the DNA from cleavage by the Bsp6I endonuclease. The polypeptide is Type II methyltransferase M.Bsp6I (Bacillus sp. (strain RFL6)).